The chain runs to 208 residues: Uracil phosphoribosyltransferase (208 aa).

Residues Arg-78, Arg-103, and 130–138 contribute to the 5-phospho-alpha-D-ribose 1-diphosphate site; that span reads DPMLATGGS. Residues Ile-193 and 198 to 200 each bind uracil; that span reads GDA. Asp-199 lines the 5-phospho-alpha-D-ribose 1-diphosphate pocket.

It belongs to the UPRTase family. Requires Mg(2+) as cofactor.

The catalysed reaction is UMP + diphosphate = 5-phospho-alpha-D-ribose 1-diphosphate + uracil. The protein operates within pyrimidine metabolism; UMP biosynthesis via salvage pathway; UMP from uracil: step 1/1. Its activity is regulated as follows. Allosterically activated by GTP. Its function is as follows. Catalyzes the conversion of uracil and 5-phospho-alpha-D-ribose 1-diphosphate (PRPP) to UMP and diphosphate. The sequence is that of Uracil phosphoribosyltransferase from Shewanella oneidensis (strain ATCC 700550 / JCM 31522 / CIP 106686 / LMG 19005 / NCIMB 14063 / MR-1).